Consider the following 202-residue polypeptide: CASP-like protein 1U4 (202 aa).

Residues 1–10 (MCLPAKWLHP) lie on the Cytoplasmic side of the membrane. Residues 11–31 (VSLIFRVAGIGLAAVSAAAML) traverse the membrane as a helical segment. At 32-56 (TASQCTVYADYGWRPRTVTYSDFPA) the chain is on the extracellular side. A helical membrane pass occupies residues 57–77 (FVYLVAATAIATLLEAVALFL). Residues 78–94 (SWSKKGKSKKSWRVLTM) lie on the Cytoplasmic side of the membrane. The chain crosses the membrane as a helical span at residues 95 to 115 (LLLGAVVPALLYTSAGAAFAV). Over 116–146 (GWEDIYYYLEPIGRRFSVCRSSVAGGRFCEH) the chain is Extracellular. The chain crosses the membrane as a helical span at residues 147–167 (VHVSMWLALGAAVAVSFAEFL). At 168–202 (TTFRWCHGSGSCSDSDSDSDSDSESGCGHGCHCKH) the chain is on the cytoplasmic side.

The protein belongs to the Casparian strip membrane proteins (CASP) family. Homodimer and heterodimers.

The protein resides in the cell membrane. The protein is CASP-like protein 1U4 of Sorghum bicolor (Sorghum).